A 95-amino-acid polypeptide reads, in one-letter code: Aspartyl/glutamyl-tRNA(Asn/Gln) amidotransferase subunit C (95 aa).

It belongs to the GatC family. Heterotrimer of A, B and C subunits.

The enzyme catalyses L-glutamyl-tRNA(Gln) + L-glutamine + ATP + H2O = L-glutaminyl-tRNA(Gln) + L-glutamate + ADP + phosphate + H(+). It carries out the reaction L-aspartyl-tRNA(Asn) + L-glutamine + ATP + H2O = L-asparaginyl-tRNA(Asn) + L-glutamate + ADP + phosphate + 2 H(+). In terms of biological role, allows the formation of correctly charged Asn-tRNA(Asn) or Gln-tRNA(Gln) through the transamidation of misacylated Asp-tRNA(Asn) or Glu-tRNA(Gln) in organisms which lack either or both of asparaginyl-tRNA or glutaminyl-tRNA synthetases. The reaction takes place in the presence of glutamine and ATP through an activated phospho-Asp-tRNA(Asn) or phospho-Glu-tRNA(Gln). This Acidiphilium cryptum (strain JF-5) protein is Aspartyl/glutamyl-tRNA(Asn/Gln) amidotransferase subunit C.